A 539-amino-acid polypeptide reads, in one-letter code: Probable malate:quinone oxidoreductase (539 aa).

This sequence belongs to the MQO family. FAD is required as a cofactor.

It carries out the reaction (S)-malate + a quinone = a quinol + oxaloacetate. The protein operates within carbohydrate metabolism; tricarboxylic acid cycle; oxaloacetate from (S)-malate (quinone route): step 1/1. This is Probable malate:quinone oxidoreductase from Sodalis glossinidius (strain morsitans).